The primary structure comprises 610 residues: Dihydroxy-acid dehydratase (610 aa).

A Mg(2+)-binding site is contributed by Asp-81. [2Fe-2S] cluster is bound at residue Cys-122. The Mg(2+) site is built by Asp-123 and Lys-124. Position 124 is an N6-carboxylysine (Lys-124). Cys-193 contributes to the [2Fe-2S] cluster binding site. Glu-489 contacts Mg(2+). Ser-515 functions as the Proton acceptor in the catalytic mechanism.

This sequence belongs to the IlvD/Edd family. In terms of assembly, homodimer. It depends on [2Fe-2S] cluster as a cofactor. The cofactor is Mg(2+).

The enzyme catalyses (2R)-2,3-dihydroxy-3-methylbutanoate = 3-methyl-2-oxobutanoate + H2O. It carries out the reaction (2R,3R)-2,3-dihydroxy-3-methylpentanoate = (S)-3-methyl-2-oxopentanoate + H2O. Its pathway is amino-acid biosynthesis; L-isoleucine biosynthesis; L-isoleucine from 2-oxobutanoate: step 3/4. It functions in the pathway amino-acid biosynthesis; L-valine biosynthesis; L-valine from pyruvate: step 3/4. Its function is as follows. Functions in the biosynthesis of branched-chain amino acids. Catalyzes the dehydration of (2R,3R)-2,3-dihydroxy-3-methylpentanoate (2,3-dihydroxy-3-methylvalerate) into 2-oxo-3-methylpentanoate (2-oxo-3-methylvalerate) and of (2R)-2,3-dihydroxy-3-methylbutanoate (2,3-dihydroxyisovalerate) into 2-oxo-3-methylbutanoate (2-oxoisovalerate), the penultimate precursor to L-isoleucine and L-valine, respectively. This Xylella fastidiosa (strain M23) protein is Dihydroxy-acid dehydratase.